Consider the following 476-residue polypeptide: ATP synthase subunit beta (476 aa).

Residue 153–160 (GGAGVGKT) participates in ATP binding.

It belongs to the ATPase alpha/beta chains family. As to quaternary structure, F-type ATPases have 2 components, CF(1) - the catalytic core - and CF(0) - the membrane proton channel. CF(1) has five subunits: alpha(3), beta(3), gamma(1), delta(1), epsilon(1). CF(0) has three main subunits: a(1), b(2) and c(9-12). The alpha and beta chains form an alternating ring which encloses part of the gamma chain. CF(1) is attached to CF(0) by a central stalk formed by the gamma and epsilon chains, while a peripheral stalk is formed by the delta and b chains.

The protein localises to the cell membrane. The catalysed reaction is ATP + H2O + 4 H(+)(in) = ADP + phosphate + 5 H(+)(out). Its function is as follows. Produces ATP from ADP in the presence of a proton gradient across the membrane. The catalytic sites are hosted primarily by the beta subunits. This is ATP synthase subunit beta from Latilactobacillus sakei subsp. sakei (strain 23K) (Lactobacillus sakei subsp. sakei).